Consider the following 29-residue polypeptide: uncharacterized protein (29 aa).

The interval 1 to 29 (MFKMKFGDTLPRSDFGTGGNKQAPGLELG) is disordered.

This is an uncharacterized protein from Saccharomyces cerevisiae (strain ATCC 204508 / S288c) (Baker's yeast).